Here is a 211-residue protein sequence, read N- to C-terminus: Ras-related protein RABB1b (211 aa).

Residue 13–20 (GDTGVGKS) participates in GTP binding. Residues 35 to 43 (HDLTIGVEF) carry the Effector region motif. Residues 61–65 (DTAGQ), 119–122 (NKCD), and 149–150 (SA) contribute to the GTP site. 2 S-geranylgeranyl cysteine lipidation sites follow: cysteine 209 and cysteine 210.

It belongs to the small GTPase superfamily. Rab family.

Its subcellular location is the cell membrane. Functionally, intracellular vesicle trafficking and protein transport. This is Ras-related protein RABB1b (RABB1B) from Arabidopsis thaliana (Mouse-ear cress).